The primary structure comprises 61 residues: Large ribosomal subunit protein bL32 (61 aa).

The segment covering 1–10 (MAQPKKKTSN) has biased composition (basic residues). Residues 1 to 23 (MAQPKKKTSNAKRDQRRATWKRK) are disordered.

The protein belongs to the bacterial ribosomal protein bL32 family.

This is Large ribosomal subunit protein bL32 from Gloeobacter violaceus (strain ATCC 29082 / PCC 7421).